The primary structure comprises 1237 residues: Anion exchange protein 2 (1237 aa).

The tract at residues 1–238 (MSSAPRRPAS…YNLQERRRIG (238 aa)) is disordered. Topologically, residues 1–703 (MSSAPRRPAS…SDFRDALDPQ (703 aa)) are cytoplasmic. 2 stretches are compositionally biased toward basic and acidic residues: residues 38–48 (LRTLGVERFEE) and 57–74 (GGEE…EYHR). Basic residues-rich tracts occupy residues 75–84 (QSSHHIHHPL) and 93–109 (RRRK…RRRP). Residues Ser112, Ser131, Ser144, Ser170, Ser172, and Ser239 each carry the phosphoserine modification. Residues 119 to 132 (TIEEGEEDEEEASE) show a composition bias toward acidic residues. A Phosphothreonine modification is found at Thr253. Residue Lys270 is modified to N6-methyllysine. The segment at 285 to 316 (VRKNAKGSTQAAREGREPGPTPRARPRAPHKP) is disordered. A Phosphoserine modification is found at Ser439. The interval 445–466 (SLLGHHHAQGTESDPHVTEPLI) is disordered. 4 helical membrane passes run 704–727 (CLAA…GLLG), 733–770 (LIGV…LLVF), 790–812 (VWIG…SFLV), and 822–843 (IFAF…IKIF). The segment at 704–1237 (CLAAVIFIYF…DEYNEMPMPV (534 aa)) is membrane (anion exchange). Residues 844 to 896 (QEHPLHGCSGSNDSEAGSSSSSNMTWATTILVPDNSSASGQSGQEKPRGQPNT) lie on the Extracellular side of the membrane. N-linked (GlcNAc...) asparagine glycans are attached at residues Asn855, Asn866, and Asn878. Residues 897 to 914 (ALLSLVLMAGTFFIAFFL) traverse the membrane as a helical segment. The Cytoplasmic portion of the chain corresponds to 915–929 (RKFKNSRFFPGRIRR). Transmembrane regions (helical) follow at residues 930-950 (VIGD…DYSI), 984-1006 (PFPV…LIFM), 1032-1053 (LLLI…LAAA), 1087-1132 (VTGL…IQFY), and 1159-1195 (MHLF…TVPL). A lipid anchor (S-palmitoyl cysteine) is attached at Cys1169.

It belongs to the anion exchanger (TC 2.A.31) family. In terms of tissue distribution, expressed in the choroid plexus epithelium (at protein level). Expressed in the parotid gland and sublingual salivary gland acinar cells (at protein level). Widely expressed at similar levels in all tissues examined. Expressed in the testis. As to expression, predominantly expressed in stomach although they are also detected at lower levels in other tissues. Expressed in the testis. In terms of tissue distribution, stomach-specific. Expressed at slightly higher levels in lung and stomach than in other tissues.

Its subcellular location is the apical cell membrane. The protein resides in the basolateral cell membrane. The catalysed reaction is hydrogencarbonate(in) + chloride(out) = hydrogencarbonate(out) + chloride(in). With respect to regulation, inhibited by 4,4'-diisothiocyanatostilbene-2,2'-disulfonic acid (DIDS) and acetazolamide. Muscarinic receptor stimulation enhances activity through a Ca(2+)-dependent mechanism. In terms of biological role, sodium-independent anion exchanger which mediates the electroneutral exchange of chloride for bicarbonate ions across the cell membrane. Plays an important role in osteoclast differentiation and function. Regulates bone resorption and calpain-dependent actin cytoskeleton organization in osteoclasts via anion exchange-dependent control of pH. Essential for intracellular pH regulation in CD8(+) T-cells upon CD3 stimulation, modulating CD8(+) T-cell responses. Plays a critical role in male fertility and spermiogenesis. This is Anion exchange protein 2 (Slc4a2) from Mus musculus (Mouse).